The primary structure comprises 306 residues: D-alanine--D-alanine ligase (306 aa).

Residues 106 to 301 (KLLWQSAGIN…FEELVLKILG (196 aa)) form the ATP-grasp domain. 132-187 (AKELGLPLIVKPSREGSTIGLSKVREAGEVAAAWHLAARHDAMVLAEQFIEGTELT) provides a ligand contact to ATP. Mg(2+)-binding residues include Asp255, Glu268, and Asn270.

This sequence belongs to the D-alanine--D-alanine ligase family. Mg(2+) is required as a cofactor. The cofactor is Mn(2+).

The protein localises to the cytoplasm. It catalyses the reaction 2 D-alanine + ATP = D-alanyl-D-alanine + ADP + phosphate + H(+). It participates in cell wall biogenesis; peptidoglycan biosynthesis. Cell wall formation. This chain is D-alanine--D-alanine ligase, found in Nitrosospira multiformis (strain ATCC 25196 / NCIMB 11849 / C 71).